The primary structure comprises 160 residues: MTKVERLLINYKTLEEFKKFKEYGIQELSMLEELQDNIIENDSTSPFYGIYFGDKLVARMSLYQVNGKSNPYFDNRQDYLELWKLEVLPGYQNRGYGRALVEFAKSFKMPIRTNPRMKSAEFWNKMNFKTVKYDMARDKGENPLIWHPDMDREMTPGESA.

In terms of domain architecture, N-acetyltransferase spans 7-151 (LLINYKTLEE…NPLIWHPDMD (145 aa)).

This is an uncharacterized protein from Bacillus subtilis (strain 168).